The following is a 162-amino-acid chain: Interleukin-15 (162 aa).

Positions Met-1–Ala-29 are cleaved as a signal peptide. Positions Gly-30 to Ala-48 are excised as a propeptide. Intrachain disulfides connect Cys-83/Cys-133 and Cys-90/Cys-136. Asn-113, Asn-121, and Asn-127 each carry an N-linked (GlcNAc...) asparagine glycan.

It belongs to the IL-15/IL-21 family.

The protein localises to the secreted. Functionally, cytokine that plays a major role in the development of inflammatory and protective immune responses to microbial invaders and parasites by modulating immune cells of both the innate and adaptive immune systems. Stimulates the proliferation of natural killer cells, T-cells and B-cells and promotes the secretion of several cytokines. In monocytes, induces the production of IL8 and monocyte chemotactic protein 1/CCL2, two chemokines that attract neutrophils and monocytes respectively to sites of infection. Unlike most cytokines, which are secreted in soluble form, IL15 is expressed in association with its high affinity IL15RA on the surface of IL15-producing cells and delivers signals to target cells that express IL2RB and IL2RG receptor subunits. Binding to its receptor triggers the phosphorylation of JAK1 and JAK3 and the recruitment and subsequent phosphorylation of signal transducer and activator of transcription-3/STAT3 and STAT5. In mast cells, induces the rapid tyrosine phosphorylation of STAT6 and thereby controls mast cell survival and release of cytokines such as IL4. This chain is Interleukin-15 (IL15), found in Bubalus bubalis (Domestic water buffalo).